The chain runs to 853 residues: Eukaryotic translation initiation factor 3 subunit C (853 aa).

The tract at residues 1-78 is disordered; it reads MSRFFAASDS…EDEDQNKVLK (78 aa). Acidic residues predominate over residues 11-46; that stretch reads SSEESSEEELYSDNEASAQEDSDKDSDDDDSDDDDS. The PCI domain occupies 599–773; that stretch reads FHMHINLELL…SAIIFRKGVE (175 aa). Residues 798 to 853 form a disordered region; the sequence is TLEQRTQGTANAFERQGGRGGRGGGRGRGGGRGGGVPRGGRNQQFTGGALGRAIQA. Positions 815–835 are enriched in gly residues; that stretch reads GRGGRGGGRGRGGGRGGGVPR.

Belongs to the eIF-3 subunit C family. As to quaternary structure, component of the eukaryotic translation initiation factor 3 (eIF-3) complex.

The protein resides in the cytoplasm. Component of the eukaryotic translation initiation factor 3 (eIF-3) complex, which is involved in protein synthesis of a specialized repertoire of mRNAs and, together with other initiation factors, stimulates binding of mRNA and methionyl-tRNAi to the 40S ribosome. The eIF-3 complex specifically targets and initiates translation of a subset of mRNAs involved in cell proliferation. This chain is Eukaryotic translation initiation factor 3 subunit C, found in Phaeosphaeria nodorum (strain SN15 / ATCC MYA-4574 / FGSC 10173) (Glume blotch fungus).